Consider the following 316-residue polypeptide: MTSGERQKPVLVILGPTASGKSALAMNIAGNLDAEIISADSRQIYRELTIGSAKPSEDDLRMVRHHFINEKTIGEPFTAGDFAEAAYARILDIHNRNKYAVVVGGSTLYLEGLLKGFGDLPPGDQEIRSRLTAELALAGGEKLFERLRKLDPIQAATLDPTKTRRLIRSLEIIEITGKTVTSLQEYRRIPALDYRIVGLSIARPILYGRIDTRVDEMIASGLVEEAEYLYKKHYSLLRTERNSALKTVGYQELFDFFEKKTDFDRAVTLIKQHTRNYAKRQLTFFKNRLNVTWMDAFGEHAAPDILRAACCRELAE.

15 to 22 (GPTASGKS) lines the ATP pocket. 17–22 (TASGKS) serves as a coordination point for substrate. Residues 40–43 (DSRQ) form an interaction with substrate tRNA region.

Belongs to the IPP transferase family. As to quaternary structure, monomer. Requires Mg(2+) as cofactor.

The catalysed reaction is adenosine(37) in tRNA + dimethylallyl diphosphate = N(6)-dimethylallyladenosine(37) in tRNA + diphosphate. Catalyzes the transfer of a dimethylallyl group onto the adenine at position 37 in tRNAs that read codons beginning with uridine, leading to the formation of N6-(dimethylallyl)adenosine (i(6)A). The polypeptide is tRNA dimethylallyltransferase (Chlorobium limicola (strain DSM 245 / NBRC 103803 / 6330)).